The sequence spans 306 residues: MMLNEMNKSLEGVDIRINEPLKKYTYTKVGGPADFLAFPRNRYELARIVKFANQNNLPWMVLGNASNLIVRDGGIRGFVIMFDKLNAVTVDGYVIEAEAGSNLIETTKVAQYHSLTGFEFACGIPGSIGGAVFMNAGAYGGEISHILISAQVLTRDGEIKTIEARDMRFGYRHSVLQDNQEVVVSAKFSLKPGDYTIISQEMQRLNHLRALKQPLEHPSCGSVFKRPLGHFAGQLIMEAQLMGHRIGGVEVSTKHAGFMVNVANGSAKNYEDLIADVIHRVKENSGVTLEPEVRIIGEKEVQMEDS.

The 166-residue stretch at 28-193 (KVGGPADFLA…VSAKFSLKPG (166 aa)) folds into the FAD-binding PCMH-type domain. The active site involves arginine 172. Serine 222 acts as the Proton donor in catalysis. Glutamate 292 is a catalytic residue.

This sequence belongs to the MurB family. Requires FAD as cofactor.

Its subcellular location is the cytoplasm. The catalysed reaction is UDP-N-acetyl-alpha-D-muramate + NADP(+) = UDP-N-acetyl-3-O-(1-carboxyvinyl)-alpha-D-glucosamine + NADPH + H(+). Its pathway is cell wall biogenesis; peptidoglycan biosynthesis. Functionally, cell wall formation. This is UDP-N-acetylenolpyruvoylglucosamine reductase from Streptococcus mutans serotype c (strain ATCC 700610 / UA159).